We begin with the raw amino-acid sequence, 70 residues long: Fumarase D (70 aa).

The protein belongs to the FumD family.

It carries out the reaction (S)-malate = fumarate + H2O. In terms of biological role, in vitro catalyzes the addition of water to fumarate, forming malate. Cannot catalyze the reverse reaction. Cannot use the cis-isomer maleate as substrate. This is Fumarase D from Salmonella typhi.